A 105-amino-acid chain; its full sequence is 5,5'-dehydrodivanillate O-demethylase ferredoxin subunit (105 aa).

The 2Fe-2S ferredoxin-type domain maps to 2-105 (AQLKVVTRDG…GMTVTIAPED (104 aa)). Residues Cys40, Cys46, Cys49, and Cys86 each coordinate [2Fe-2S] cluster.

Belongs to the adrenodoxin/putidaredoxin family. Monomer. The three-component monooxygenase is composed of an oxygenase (LigXa), a ferredoxin (LigXc) and a ferredoxin reductase (LigXd). [2Fe-2S] cluster is required as a cofactor.

It carries out the reaction 5,5'-dehydrodivanillate + NADH + O2 + H(+) = 2,2',3-trihydroxy-3'-methoxy-5,5'-dicarboxybiphenyl + formaldehyde + NAD(+) + H2O. Functionally, involved in the catabolism of 5,5'-dehydrodivanillate (DDVA), an intermediate in the biodegradation of lignin. Part of a three-component monooxygenase that catalyzes the O-demethylation of DDVA, leading to the formation of 2,2',3-trihydroxy-3'-methoxy-5,5'-dicarboxybiphenyl (OH-DDVA). LigXc probably functions as an intermediate electron transfer protein between LigXd and LigXa. The protein is 5,5'-dehydrodivanillate O-demethylase ferredoxin subunit of Sphingobium sp. (strain NBRC 103272 / SYK-6).